A 390-amino-acid chain; its full sequence is Neuromedin-B receptor (390 aa).

The Extracellular portion of the chain corresponds to 1 to 41 (MPPRSLSNLSFPTEANESELVPEVWEKDFLPDSDGTTAELV). N-linked (GlcNAc...) asparagine glycosylation is found at Asn8 and Asn16. The helical transmembrane segment at 42–65 (IRCVIPSLYLIIISVGLLGNIMLV) threads the bilayer. The Cytoplasmic segment spans residues 66 to 79 (KIFLTNSAMRNVPN). A helical membrane pass occupies residues 80–99 (IFISNLAAGDLLLLLTCVPV). Over 100–117 (DASRYFFDEWVFGKLGCK) the chain is Extracellular. Cys116 and Cys198 are disulfide-bonded. The helical transmembrane segment at 118-139 (LIPAIQLTSVGVSVFTLTALSA) threads the bilayer. The Cytoplasmic segment spans residues 140–156 (DRYRAIVNPMDMQTSGV). The chain crosses the membrane as a helical span at residues 157–177 (LLWTSLKAVGIWVVSVLLAVP). Over 178–211 (EAVFSEVARIGSLDNSSFTACIPYPQTDELHPKI) the chain is Extracellular. Asn192 carries an N-linked (GlcNAc...) asparagine glycan. Residues 212 to 235 (HSVLIFLVYFLIPLVIISIYYYHI) traverse the membrane as a helical segment. The Cytoplasmic segment spans residues 236-266 (AKTLIKSAHNLPGEYNEHTKKQMETRKRLAK). The chain crosses the membrane as a helical span at residues 267 to 287 (IVLVFVGCFVFCWFPNHVLYL). The Extracellular portion of the chain corresponds to 288-299 (YRSFNYKEIDPS). A helical transmembrane segment spans residues 300–327 (LGHMIVTLVARVLSFSNSCVNPFALYLL). Residues 328 to 390 (SESFRKHFNS…GHSTKQEIAL (63 aa)) lie on the Cytoplasmic side of the membrane. Cys341 is lipidated: S-palmitoyl cysteine. Ser352 bears the Phosphoserine mark.

It belongs to the G-protein coupled receptor 1 family. As to expression, expressed in a subset of neurons of the pre-Botzinger complex. Within the pre-Botzinger complex, there is some overlap with neurons expressing Grpr with some cells expressing only Grpr or Nmbr while some cells express both. Expressed in dorsal root ganglion neurons and mast cells. Expressed in lung.

Its subcellular location is the cell membrane. Receptor for neuromedin-B. Contributes to the maintenance of basal sigh rate through signaling in the pre-Botzinger complex, a cluster of several thousand neurons in the ventrolateral medulla responsible for inspiration during respiratory activity. Contributes to the induction of sneezing following exposure to chemical irritants or allergens which causes release of NMB by nasal sensory neurons and activation of NMBR-expressing neurons in the sneeze-evoking region of the brainstem. These in turn activate neurons of the caudal ventral respiratory group, giving rise to the sneezing response. Contributes to induction of acute itch, possibly through its activation on dorsal root ganglion neurons by the NMB peptide. Plays a role in the innate immune response to influenza A virus infection by enhancing interferon alpha expression and reducing expression of IL6. Plays a role in CSF1-induced proliferation of osteoclast precursors by contributing to the positive regulation of the expression of the CSF1 receptor CSF1R. This chain is Neuromedin-B receptor (Nmbr), found in Mus musculus (Mouse).